Consider the following 468-residue polypeptide: uncharacterized protein (468 aa).

The interval 1–22 (MVKRSSHRQVVLDEDDEENYNN) is disordered. An RING-type zinc finger spans residues 85–123 (CPICTEALQRPFTTHCGHTYCYECLLNWLKESKSCPTCR). Over residues 386–402 (DSLNSSSNNSPSHNNIH) the composition is skewed to low complexity. A disordered region spans residues 386 to 468 (DSLNSSSNNS…TIQLDSDEES (83 aa)). Positions 417 to 434 (IVTNGTGLRSSQSSSQNR) are enriched in polar residues.

The protein localises to the nucleus. This is an uncharacterized protein from Schizosaccharomyces pombe (strain 972 / ATCC 24843) (Fission yeast).